The sequence spans 366 residues: Succinyl-diaminopimelate desuccinylase (366 aa).

His66 contributes to the Zn(2+) binding site. Residue Asp68 is part of the active site. Position 97 (Asp97) interacts with Zn(2+). The Proton acceptor role is filled by Glu127. Zn(2+) contacts are provided by Glu128, Glu156, and His341.

This sequence belongs to the peptidase M20A family. DapE subfamily. Homodimer. Zn(2+) serves as cofactor. Co(2+) is required as a cofactor.

The enzyme catalyses N-succinyl-(2S,6S)-2,6-diaminopimelate + H2O = (2S,6S)-2,6-diaminopimelate + succinate. Its pathway is amino-acid biosynthesis; L-lysine biosynthesis via DAP pathway; LL-2,6-diaminopimelate from (S)-tetrahydrodipicolinate (succinylase route): step 3/3. Functionally, catalyzes the hydrolysis of N-succinyl-L,L-diaminopimelic acid (SDAP), forming succinate and LL-2,6-diaminopimelate (DAP), an intermediate involved in the bacterial biosynthesis of lysine and meso-diaminopimelic acid, an essential component of bacterial cell walls. The sequence is that of Succinyl-diaminopimelate desuccinylase from Aliarcobacter butzleri (strain RM4018) (Arcobacter butzleri).